A 188-amino-acid polypeptide reads, in one-letter code: Elongation factor P (188 aa).

The protein belongs to the elongation factor P family.

It localises to the cytoplasm. Its pathway is protein biosynthesis; polypeptide chain elongation. Functionally, involved in peptide bond synthesis. Stimulates efficient translation and peptide-bond synthesis on native or reconstituted 70S ribosomes in vitro. Probably functions indirectly by altering the affinity of the ribosome for aminoacyl-tRNA, thus increasing their reactivity as acceptors for peptidyl transferase. This is Elongation factor P from Streptomyces coelicolor (strain ATCC BAA-471 / A3(2) / M145).